Here is a 60-residue protein sequence, read N- to C-terminus: uncharacterized protein (60 aa).

This is an uncharacterized protein from Schizosaccharomyces pombe (strain 972 / ATCC 24843) (Fission yeast).